A 191-amino-acid chain; its full sequence is Dephospho-CoA kinase (191 aa).

In terms of domain architecture, DPCK spans 3-191 (AIGITGSYAS…KLIKNLECQV (189 aa)). Position 11 to 16 (11 to 16 (ASGKTF)) interacts with ATP.

This sequence belongs to the CoaE family.

The protein localises to the cytoplasm. The enzyme catalyses 3'-dephospho-CoA + ATP = ADP + CoA + H(+). Its pathway is cofactor biosynthesis; coenzyme A biosynthesis; CoA from (R)-pantothenate: step 5/5. Its function is as follows. Catalyzes the phosphorylation of the 3'-hydroxyl group of dephosphocoenzyme A to form coenzyme A. This is Dephospho-CoA kinase from Rickettsia typhi (strain ATCC VR-144 / Wilmington).